Reading from the N-terminus, the 78-residue chain is Small ribosomal subunit protein bS18 (78 aa).

Belongs to the bacterial ribosomal protein bS18 family. In terms of assembly, part of the 30S ribosomal subunit. Forms a tight heterodimer with protein bS6.

Binds as a heterodimer with protein bS6 to the central domain of the 16S rRNA, where it helps stabilize the platform of the 30S subunit. This chain is Small ribosomal subunit protein bS18, found in Levilactobacillus brevis (strain ATCC 367 / BCRC 12310 / CIP 105137 / JCM 1170 / LMG 11437 / NCIMB 947 / NCTC 947) (Lactobacillus brevis).